The chain runs to 107 residues: Frataxin (107 aa).

This sequence belongs to the frataxin family. As to quaternary structure, monomer.

The protein localises to the cytoplasm. Functionally, promotes the assembly and repair of iron-sulfur clusters by delivering Fe(2+) to proteins involved in these pathways. This Trachipleistophora hominis (Microsporidian parasite) protein is Frataxin (YFH1).